A 251-amino-acid polypeptide reads, in one-letter code: Fibroblast growth factor 23 (251 aa).

Residues Met1–Ala24 form the signal peptide. Cys95 and Cys113 are joined by a disulfide. Thr171 and Thr178 each carry an O-linked (GalNAc) threonine glycan. The interval Pro172 to Ser221 is disordered. Ser180 bears the Phosphoserine; by FAM20C mark. Polar residues predominate over residues Ser205 to Met219.

It belongs to the heparin-binding growth factors family. In terms of assembly, interacts with FGFR1, FGFR2, FGFR3 and FGFR4. Affinity between fibroblast growth factors (FGFs) and their receptors is increased by KL and heparan sulfate glycosaminoglycans that function as coreceptors. Following secretion this protein is inactivated by cleavage into a N-terminal fragment and a C-terminal fragment. The processing is effected by proprotein convertases. In terms of processing, O-glycosylated at Thr-171 and Thr-178 by GALNT3 and glycosylation of Thr-178 requires previous glycosylation at Thr171. Glycosylation is necessary for secretion; it blocks processing by proprotein convertases when the O-glycan is alpha 2,6-sialylated. Competition between proprotein convertase cleavage and block of cleavage by O-glycosylation determines the level of secreted active FGF23. Post-translationally, phosphorylation at Ser-180 mediated by FAM20C slows down glycosylation at Thr-178 notably. In terms of tissue distribution, expressed in osteogenic cells particularly during phases of active bone remodeling. In adult trabecular bone, expressed in osteocytes and flattened bone-lining cells (inactive osteoblasts).

It is found in the secreted. Its function is as follows. Regulator of phosphate homeostasis. Inhibits renal tubular phosphate transport by reducing SLC34A1 levels. Up-regulates EGR1 expression in the presence of KL. Acts directly on the parathyroid to decrease PTH secretion. Regulator of vitamin-D metabolism. Negatively regulates osteoblast differentiation and matrix mineralization. This Homo sapiens (Human) protein is Fibroblast growth factor 23 (FGF23).